Reading from the N-terminus, the 800-residue chain is Putative antiporter subunit mnhA2 (800 aa).

The next 21 membrane-spanning stretches (helical) occupy residues 1-21, 29-49, 78-98, 109-129, 133-153, 167-187, 209-229, 241-261, 272-292, 300-320, 336-356, 387-407, 424-444, 472-492, 528-548, 595-615, 627-647, 651-671, 676-696, 712-732, and 768-788; these read MSLVYLMATNLLFMLIVLFTL, VAGYVALIAPIVTSTYFIMKI, GLSLMFGLIISLIGVGVFFYA, LPRFFIYLLLFMFSMIGIVIA, ILMYVFWELTSISSFLLISYW, FMITVFGGLALLTGFIILYII, FIPMILMLLLGAFTKSAQFPF, TPVSAYLHSATMVKAGIFLLF, VYIYTVTFVGLITMLFGSLTA, GILAYSTISQLGMIMTMVGLG, ILVLFAGLFHLMNHAVFKCAL, IVMLLAALSMAGVPFLNGFLS, YGFVLTFVIISIGVIASILTF, PWLFSLPAVILMLLIPVIFFV, VNLPLILSIVVIIIGLILALV, IMITLFIFVAIVVYGYLTVGF, GPLEVILSVVTLIIGISLIFI, LTMVVLNGMIGFAVTLYFIAM, LALTQLVVETITTILFIVSFS, TFKIIVSLVMALTVVSLIFVA, and LDTMFEGLVLIIAGLGIYTLL.

Belongs to the CPA3 antiporters (TC 2.A.63) subunit A family. May form a heterooligomeric complex that consists of seven subunits: mnhA2, mnhB2, mnhC2, mnhD2, mnhE2, mnhF2 and mnhG2.

The protein localises to the cell membrane. This is Putative antiporter subunit mnhA2 (mnhA2) from Staphylococcus epidermidis (strain ATCC 12228 / FDA PCI 1200).